Consider the following 349-residue polypeptide: Biotin synthase (349 aa).

In terms of domain architecture, Radical SAM core spans 70 to 295 (PEVEVEGIIS…RTMLRFAGGR (226 aa)). [4Fe-4S] cluster contacts are provided by cysteine 85, cysteine 89, and cysteine 92. [2Fe-2S] cluster-binding residues include cysteine 128, cysteine 161, cysteine 220, and arginine 290.

This sequence belongs to the radical SAM superfamily. Biotin synthase family. In terms of assembly, homodimer. Requires [4Fe-4S] cluster as cofactor. [2Fe-2S] cluster is required as a cofactor.

The catalysed reaction is (4R,5S)-dethiobiotin + (sulfur carrier)-SH + 2 reduced [2Fe-2S]-[ferredoxin] + 2 S-adenosyl-L-methionine = (sulfur carrier)-H + biotin + 2 5'-deoxyadenosine + 2 L-methionine + 2 oxidized [2Fe-2S]-[ferredoxin]. The protein operates within cofactor biosynthesis; biotin biosynthesis; biotin from 7,8-diaminononanoate: step 2/2. In terms of biological role, catalyzes the conversion of dethiobiotin (DTB) to biotin by the insertion of a sulfur atom into dethiobiotin via a radical-based mechanism. This Mycobacterium bovis (strain ATCC BAA-935 / AF2122/97) protein is Biotin synthase.